The sequence spans 664 residues: ATP synthase subunit alpha 2 (664 aa).

Residue Gly180–Thr187 participates in ATP binding. The interval Met525–Arg664 is disordered. Over residues Ala543–Ala588 the composition is skewed to basic and acidic residues. Low complexity predominate over residues Ala589–Pro599. The span at Ala621–Ala639 shows a compositional bias: basic and acidic residues.

The protein belongs to the ATPase alpha/beta chains family. In terms of assembly, F-type ATPases have 2 components, CF(1) - the catalytic core - and CF(0) - the membrane proton channel. CF(1) has five subunits: alpha(3), beta(3), gamma(1), delta(1), epsilon(1). CF(0) has three main subunits: a(1), b(2) and c(9-12). The alpha and beta chains form an alternating ring which encloses part of the gamma chain. CF(1) is attached to CF(0) by a central stalk formed by the gamma and epsilon chains, while a peripheral stalk is formed by the delta and b chains.

Its subcellular location is the cell inner membrane. It carries out the reaction ATP + H2O + 4 H(+)(in) = ADP + phosphate + 5 H(+)(out). Its function is as follows. Produces ATP from ADP in the presence of a proton gradient across the membrane. The alpha chain is a regulatory subunit. The chain is ATP synthase subunit alpha 2 from Burkholderia pseudomallei (strain 1710b).